A 1478-amino-acid polypeptide reads, in one-letter code: Phospholipase B1, membrane-associated (1478 aa).

Positions 1 to 27 are cleaved as a signal peptide; the sequence is MELYPGVSPVGLLLLLLLGQGPSQIHG. Residues 28–1422 are Extracellular-facing; the sequence is SSGENTLAWQ…KAEEPSNALY (1395 aa). Repeat copies occupy residues 43-351, 366-711, 712-1058, and 1068-1407. The segment at 43-1407 is 4 X 308-326 AA approximate repeats; that stretch reads WTLKNFPFPC…RPFLYTLRNS (1365 aa). The N-linked (GlcNAc...) asparagine glycan is linked to asparagine 180. Active-site residues include serine 404 and aspartate 518. N-linked (GlcNAc...) asparagine glycans are attached at residues asparagine 525, asparagine 626, and asparagine 637. The active site involves histidine 659. N-linked (GlcNAc...) asparagine glycans are attached at residues asparagine 715, asparagine 764, asparagine 787, asparagine 801, asparagine 830, asparagine 926, asparagine 1227, asparagine 1280, asparagine 1289, and asparagine 1387. Positions 1408 to 1450 are necessary for membrane localization; that stretch reads QLLPDKAEEPSNALYWAVPVAAIGGLAVGILGVMLWRTVKPVQ. A helical transmembrane segment spans residues 1423 to 1443; that stretch reads WAVPVAAIGGLAVGILGVMLW. Over 1444–1478 the chain is Cytoplasmic; that stretch reads RTVKPVQQEEEEEDTLPNTSVTQDAVSEKRLKAGN. Positions 1451–1478 are disordered; the sequence is QEEEEEDTLPNTSVTQDAVSEKRLKAGN. Residues 1459–1468 show a composition bias toward polar residues; it reads LPNTSVTQDA. Residues 1469–1478 are compositionally biased toward basic and acidic residues; it reads VSEKRLKAGN.

It belongs to the 'GDSL' lipolytic enzyme family. Phospholipase B1 subfamily. In terms of processing, undergoes proteolytic cleavage in the ileum.

It is found in the apical cell membrane. It carries out the reaction a 1,2-diacyl-sn-glycero-3-phosphocholine + H2O = a 1-acyl-sn-glycero-3-phosphocholine + a fatty acid + H(+). It catalyses the reaction a 1-O-alkyl-2-acyl-sn-glycero-3-phosphocholine + H2O = a 1-O-alkyl-sn-glycero-3-phosphocholine + a fatty acid + H(+). The enzyme catalyses a 1-acyl-sn-glycero-3-phosphocholine + H2O = sn-glycerol 3-phosphocholine + a fatty acid + H(+). The catalysed reaction is a triacylglycerol + H2O = a diacylglycerol + a fatty acid + H(+). It carries out the reaction 1,2-dihexadecanoyl-sn-glycero-3-phosphocholine + H2O = 1-hexadecanoyl-sn-glycero-3-phosphocholine + hexadecanoate + H(+). It catalyses the reaction 1-hexadecanoyl-2-(9Z-octadecenoyl)-sn-glycero-3-phosphocholine + H2O = 1-hexadecanoyl-sn-glycero-3-phosphocholine + (9Z)-octadecenoate + H(+). The enzyme catalyses 1,2-di-(9Z-octadecenoyl)-sn-glycero-3-phosphocholine + H2O = 1-(9Z-octadecenoyl)-sn-glycero-3-phosphocholine + (9Z)-octadecenoate + H(+). The catalysed reaction is 1-hexadecanoyl-2-(9Z,12Z-octadecadienoyl)-sn-glycero-3-phosphocholine + H2O = (9Z,12Z)-octadecadienoate + 1-hexadecanoyl-sn-glycero-3-phosphocholine + H(+). It carries out the reaction 1-hexadecanoyl-2-(9Z,12Z-octadecadienoyl)-sn-glycero-3-phosphocholine + H2O = 2-(9Z,12Z-octadecadienoyl)-sn-glycero-3-phosphocholine + hexadecanoate + H(+). It catalyses the reaction 1-hexadecanoyl-2-(9Z-octadecenoyl)-sn-glycero-3-phosphoethanolamine + H2O = 1-hexadecanoyl-sn-glycero-3-phosphoethanolamine + (9Z)-octadecenoate + H(+). The enzyme catalyses 1-hexadecanoyl-2-(9Z-octadecenoyl)-sn-glycero-3-phospho-(1'-sn-glycerol) + H2O = 1-hexadecanoyl-sn-glycero-3-phospho-(1'-sn-glycerol) + (9Z)-octadecenoate + H(+). The catalysed reaction is 1,2-dihexadecanoyl-sn-glycero-3-phosphocholine + 2 H2O = sn-glycerol 3-phosphocholine + 2 hexadecanoate + 2 H(+). It carries out the reaction 1-O-hexadecyl-2-(9Z)-octadecenoyl-sn-glycero-3-phosphocholine + H2O = 1-O-hexadecyl-sn-glycero-3-phosphocholine + (9Z)-octadecenoate + H(+). It catalyses the reaction 1-hexadecanoyl-sn-glycero-3-phosphocholine + H2O = sn-glycerol 3-phosphocholine + hexadecanoate + H(+). The enzyme catalyses 1,2,3-tri-(9Z-octadecenoyl)-glycerol + H2O = di-(9Z)-octadecenoylglycerol + (9Z)-octadecenoate + H(+). The catalysed reaction is 1-hexadecanoyl-2-(9Z)-octadecenoyl-3-octadecanoyl-sn-glycerol + H2O = 1-hexadecanoyl-2-(9Z-octadecenoyl)-sn-glycerol + octadecanoate + H(+). It carries out the reaction 1,3-dihexadecanoyl-2-(9Z-octadecenoyl)glycerol + H2O = 1,3-dihexadecanoylglycerol + (9Z)-octadecenoate + H(+). It catalyses the reaction 1,3-dihexadecanoyl-2-(9Z-octadecenoyl)glycerol + H2O = 1-hexadecanoyl-2-(9Z-octadecenoyl)-glycerol + hexadecanoate + H(+). The enzyme catalyses 1-hexadecanoyl-2-(9Z)-octadecenoyl-3-octadecanoyl-sn-glycerol + H2O = 1-hexadecanoyl-3-octadecanoyl-sn-glycerol + (9Z)-octadecenoate + H(+). The catalysed reaction is 1-hexadecanoyl-2-(9Z)-octadecenoyl-3-octadecanoyl-sn-glycerol + H2O = 2-(9Z-octadecenoyl)-3-octadecanoyl-sn-glycerol + hexadecanoate + H(+). It carries out the reaction 1-octadecanoyl-2-(9Z,12Z)-octadecadienoyl-sn-glycerol + H2O = 1-octadecanoyl-sn-glycerol + (9Z,12Z)-octadecadienoate + H(+). It catalyses the reaction 1,2-di-(9Z-octadecenoyl)-sn-glycerol + H2O = 1-(9Z-octadecenoyl)-sn-glycerol + (9Z)-octadecenoate + H(+). The enzyme catalyses 2,3-di-(9Z)-octadecenoyl-sn-glycerol + H2O = 3-(9Z-octadecenoyl)-sn-glycerol + (9Z)-octadecenoate + H(+). The catalysed reaction is 1,3-di-(9Z-octadecenoyl)-glycerol + H2O = 1-(9Z-octadecenoyl)-glycerol + (9Z)-octadecenoate + H(+). It carries out the reaction 1-(9Z-octadecenoyl)-glycerol + H2O = glycerol + (9Z)-octadecenoate + H(+). It catalyses the reaction 2-(9Z-octadecenoyl)-glycerol + H2O = glycerol + (9Z)-octadecenoate + H(+). Functionally, calcium-independent membrane-associated phospholipase that catalyzes complete diacylation of phospholipids by hydrolyzing both sn-1 and sn-2 fatty acyl chains attached to the glycerol backbone (phospholipase B activity). Has dual phospholipase and lysophospholipase activities toward diacylphospholipids. Preferentially cleaves sn-2 ester bonds over sn-1 bonds. Acts as a lipase toward glycerolipid substrates. Hydrolyzes fatty acyl chains of diacylglycerols with preference for the sn-2 position and of triacylglycerols with not positional selectivity. May also hydrolyze long chain retinyl esters such as retinyl palmitate. May contribute to digestion of dietary phospholipids, glycerolipids and retinoids, facilitating lipid absorption at the brush border. In Mus musculus (Mouse), this protein is Phospholipase B1, membrane-associated (Plb1).